We begin with the raw amino-acid sequence, 241 residues long: Acetoacetyl-CoA reductase (241 aa).

NADP(+) contacts are provided by residues 12–14 (RGI), Arg39, and 82–86 (NAGIT). Substrate contacts are provided by residues Asp88 and 141–144 (QMGQ). Tyr147 (proton acceptor) is an active-site residue. 177–180 (PGYI) contributes to the NADP(+) binding site. 178 to 179 (GY) provides a ligand contact to substrate.

This sequence belongs to the short-chain dehydrogenases/reductases (SDR) family.

The protein localises to the cytoplasm. The enzyme catalyses a (3R)-3-hydroxyacyl-CoA + NADP(+) = a 3-oxoacyl-CoA + NADPH + H(+). Its pathway is biopolymer metabolism; poly-(R)-3-hydroxybutanoate biosynthesis. This Rhizobium meliloti (strain 1021) (Ensifer meliloti) protein is Acetoacetyl-CoA reductase.